We begin with the raw amino-acid sequence, 757 residues long: Probable tRNA (uracil-O(2)-)-methyltransferase (757 aa).

2 disordered regions span residues 55 to 93 and 108 to 138; these read EARG…GPEQ and QQEE…GDFP. Residues 72-84 show a composition bias toward gly residues; sequence PGPGQGSPGGGPG. Position 78 is a phosphoserine (serine 78). Over residues 123 to 136 the composition is skewed to basic and acidic residues; that stretch reads DSGHPGHAEGREGD. Serine 533 is subject to Phosphoserine. The C3H1-type zinc finger occupies 713 to 743; sequence ACKTRLCWFFMHHPDGCALSTDCCPFAHGPA.

The protein belongs to the TRM44 family.

The protein resides in the cytoplasm. The catalysed reaction is uridine(44) in tRNA(Ser) + S-adenosyl-L-methionine = 2'-O-methyluridine(44) in tRNA(Ser) + S-adenosyl-L-homocysteine + H(+). Probable adenosyl-L-methionine (AdoMet)-dependent tRNA (uracil-O(2)-)-methyltransferase. This is Probable tRNA (uracil-O(2)-)-methyltransferase (TRMT44) from Homo sapiens (Human).